Here is a 347-residue protein sequence, read N- to C-terminus: F-box protein At2g14500 (347 aa).

The F-box domain maps to 6–52 (PLTLSELPHDLLRNIFNRLSFADFHRATWNSISKQTAPPKTKSPWLI).

This is F-box protein At2g14500 from Arabidopsis thaliana (Mouse-ear cress).